A 60-amino-acid chain; its full sequence is LKCNRLIPPFWKTCPEGKNLCYKMTMRLAPKVPVKRGCIDVCPKSSLLIKYMCCTNDKCN.

4 cysteine pairs are disulfide-bonded: Cys-3–Cys-21, Cys-14–Cys-38, Cys-42–Cys-53, and Cys-54–Cys-59.

Belongs to the three-finger toxin family. Short-chain subfamily. Type IA cytotoxin sub-subfamily. Monomer in solution; Homodimer and oligomer in the presence of negatively charged lipids forming a pore with a size ranging between 20 and 30 angstroms. As to expression, expressed by the venom gland.

It is found in the secreted. Its subcellular location is the target cell membrane. In terms of biological role, basic protein that binds to cell membrane and depolarizes cardiomyocytes. This cytotoxin also possesses lytic activity on many other cells, including red blood cells. Interaction with sulfatides in the cell membrane induces pore formation and cell internalization and is responsible for cytotoxicity in cardiomyocytes. It targets the mitochondrial membrane and induces mitochondrial swelling and fragmentation. Inhibits protein kinases C. It binds to the integrin alpha-V/beta-3 with a moderate affinity. The sequence is that of Naniproin from Naja nigricollis (Black-necked spitting cobra).